The primary structure comprises 401 residues: Probable tRNA sulfurtransferase (401 aa).

Residues 60–165 form the THUMP domain; that stretch reads EPIIDKLKNV…QEGTYITCHD (106 aa). Residues 183 to 184, 208 to 209, arginine 265, glycine 287, and glutamine 296 contribute to the ATP site; these read ML and HF.

It belongs to the ThiI family.

The protein localises to the cytoplasm. The catalysed reaction is [ThiI sulfur-carrier protein]-S-sulfanyl-L-cysteine + a uridine in tRNA + 2 reduced [2Fe-2S]-[ferredoxin] + ATP + H(+) = [ThiI sulfur-carrier protein]-L-cysteine + a 4-thiouridine in tRNA + 2 oxidized [2Fe-2S]-[ferredoxin] + AMP + diphosphate. The enzyme catalyses [ThiS sulfur-carrier protein]-C-terminal Gly-Gly-AMP + S-sulfanyl-L-cysteinyl-[cysteine desulfurase] + AH2 = [ThiS sulfur-carrier protein]-C-terminal-Gly-aminoethanethioate + L-cysteinyl-[cysteine desulfurase] + A + AMP + 2 H(+). It functions in the pathway cofactor biosynthesis; thiamine diphosphate biosynthesis. Catalyzes the ATP-dependent transfer of a sulfur to tRNA to produce 4-thiouridine in position 8 of tRNAs, which functions as a near-UV photosensor. Also catalyzes the transfer of sulfur to the sulfur carrier protein ThiS, forming ThiS-thiocarboxylate. This is a step in the synthesis of thiazole, in the thiamine biosynthesis pathway. The sulfur is donated as persulfide by IscS. The polypeptide is Probable tRNA sulfurtransferase (Geobacillus sp. (strain WCH70)).